The primary structure comprises 152 residues: UPF0756 membrane protein Moth_1009 (152 aa).

Helical transmembrane passes span 5-25 (LIILAVLVVAVLGRANTVALA), 41-61 (IFPFIEKGGTFWGLVLLIAAI), 75-95 (LGHVFLSWVGLSAFILSLITT), and 117-137 (LILGAVIAAAFLGGVPVGPFI).

It belongs to the UPF0756 family.

It localises to the cell membrane. This chain is UPF0756 membrane protein Moth_1009, found in Moorella thermoacetica (strain ATCC 39073 / JCM 9320).